Reading from the N-terminus, the 164-residue chain is General odorant-binding protein 1 (164 aa).

The first 19 residues, 1–19 (MPGVLRALLLLAAAAPLLA), serve as a signal peptide directing secretion. 3 cysteine pairs are disulfide-bonded: Cys38/Cys73, Cys69/Cys127, and Cys116/Cys136.

It belongs to the PBP/GOBP family. In terms of tissue distribution, antenna.

Functionally, present in the aqueous fluid surrounding olfactory sensory dendrites and are thought to aid in the capture and transport of hydrophobic odorants into and through this fluid. This Heliothis virescens (Tobacco budworm moth) protein is General odorant-binding protein 1.